Here is a 234-residue protein sequence, read N- to C-terminus: tRNA (guanine-N(1)-)-methyltransferase (234 aa).

S-adenosyl-L-methionine is bound by residues glycine 115 and 135 to 140 (VGDYIL).

Belongs to the RNA methyltransferase TrmD family. As to quaternary structure, homodimer.

The protein resides in the cytoplasm. The enzyme catalyses guanosine(37) in tRNA + S-adenosyl-L-methionine = N(1)-methylguanosine(37) in tRNA + S-adenosyl-L-homocysteine + H(+). Its function is as follows. Specifically methylates guanosine-37 in various tRNAs. The sequence is that of tRNA (guanine-N(1)-)-methyltransferase from Rickettsia rickettsii (strain Iowa).